Reading from the N-terminus, the 194-residue chain is MNLIPTVVEKNARGERSYDIFSRLLKERIIFVTGKIEDYMANLIIAQMIFLESEDPEKDIFLYINSPGGVVTSGMSIYDTMQFIKCEVSTLCIGQSSSMAALILASGEKGKRFSLPNARIMIHQPLGGSQGQATDIAIHTTEILKIKKCMIELLSKHTGQSAEIISKDTERDRFFSGSEAVIYGLIDKVITCRK.

Ser98 (nucleophile) is an active-site residue. Residue His123 is part of the active site.

Belongs to the peptidase S14 family. As to quaternary structure, fourteen ClpP subunits assemble into 2 heptameric rings which stack back to back to give a disk-like structure with a central cavity, resembling the structure of eukaryotic proteasomes.

The protein localises to the cytoplasm. The catalysed reaction is Hydrolysis of proteins to small peptides in the presence of ATP and magnesium. alpha-casein is the usual test substrate. In the absence of ATP, only oligopeptides shorter than five residues are hydrolyzed (such as succinyl-Leu-Tyr-|-NHMec, and Leu-Tyr-Leu-|-Tyr-Trp, in which cleavage of the -Tyr-|-Leu- and -Tyr-|-Trp bonds also occurs).. In terms of biological role, cleaves peptides in various proteins in a process that requires ATP hydrolysis. Has a chymotrypsin-like activity. Plays a major role in the degradation of misfolded proteins. The sequence is that of ATP-dependent Clp protease proteolytic subunit from Wigglesworthia glossinidia brevipalpis.